We begin with the raw amino-acid sequence, 432 residues long: Enolase (432 aa).

Glutamine 163 provides a ligand contact to (2R)-2-phosphoglycerate. The active-site Proton donor is the glutamate 205. Positions 241, 289, and 316 each coordinate Mg(2+). (2R)-2-phosphoglycerate is bound by residues lysine 341, arginine 370, serine 371, and lysine 392. The active-site Proton acceptor is lysine 341.

Belongs to the enolase family. Mg(2+) is required as a cofactor.

It is found in the cytoplasm. The protein localises to the secreted. Its subcellular location is the cell surface. It catalyses the reaction (2R)-2-phosphoglycerate = phosphoenolpyruvate + H2O. It functions in the pathway carbohydrate degradation; glycolysis; pyruvate from D-glyceraldehyde 3-phosphate: step 4/5. Catalyzes the reversible conversion of 2-phosphoglycerate (2-PG) into phosphoenolpyruvate (PEP). It is essential for the degradation of carbohydrates via glycolysis. The chain is Enolase from Treponema pallidum (strain Nichols).